The chain runs to 151 residues: Small ribosomal subunit protein bS6 (151 aa).

Residues 97-151 (EAEPSAMMQKRDRDDRKDRDRGDRPRRRDDDFGGGDRGDRGDRGDRPERNFGGEN) are disordered. A compositionally biased stretch (basic and acidic residues) spans 105–151 (QKRDRDDRKDRDRGDRPRRRDDDFGGGDRGDRGDRGDRPERNFGGEN).

This sequence belongs to the bacterial ribosomal protein bS6 family.

Functionally, binds together with bS18 to 16S ribosomal RNA. The protein is Small ribosomal subunit protein bS6 of Methylorubrum populi (strain ATCC BAA-705 / NCIMB 13946 / BJ001) (Methylobacterium populi).